Reading from the N-terminus, the 36-residue chain is Photosystem I reaction center subunit VIII (36 aa).

Residues 9–29 traverse the membrane as a helical segment; it reads ISVPLVGLVFPAITMVLSFIY.

It belongs to the PsaI family.

Its subcellular location is the plastid. It is found in the chloroplast thylakoid membrane. May help in the organization of the PsaL subunit. The polypeptide is Photosystem I reaction center subunit VIII (Huperzia lucidula (Shining clubmoss)).